The primary structure comprises 174 residues: Cytochrome c-type biogenesis protein CcmE (174 aa).

Topologically, residues 1 to 8 are cytoplasmic; that stretch reads MNPRRKSR. The chain crosses the membrane as a helical; Signal-anchor for type II membrane protein span at residues 9-29; the sequence is LSVVLFILLGISVASALVLYA. Residues 30 to 174 lie on the Periplasmic side of the membrane; it reads LRQNIDLFYT…QEKQFKEGNQ (145 aa). 2 residues coordinate heme: His131 and Tyr135. Positions 149–174 are disordered; sequence KPMGISDLKNESDRDRQEKQFKEGNQ. The segment covering 156-174 has biased composition (basic and acidic residues); sequence LKNESDRDRQEKQFKEGNQ.

This sequence belongs to the CcmE/CycJ family.

The protein localises to the cell inner membrane. Functionally, heme chaperone required for the biogenesis of c-type cytochromes. Transiently binds heme delivered by CcmC and transfers the heme to apo-cytochromes in a process facilitated by CcmF and CcmH. This is Cytochrome c-type biogenesis protein CcmE from Histophilus somni (strain 2336) (Haemophilus somnus).